The primary structure comprises 1801 residues: Protein mono-ADP-ribosyltransferase PARP14 (1801 aa).

S33 carries the post-translational modification Phosphoserine. Positions 109 to 132 are disordered; the sequence is SKTKEDVKEPDVSEELDTKLPLDG. Macro domains are found at residues 791–978, 1003–1190, and 1216–1387; these read KCFS…KTVF, WEKG…ARRA, and DSGV…KKRE. A glycoprotein is bound by residues N824, L833, 922-926, D961, 1023-1024, S1034, 1046-1049, 1133-1137, 1175-1178, 1235-1236, S1247, V1258, 1332-1336, and F1371; these read SSGVF, VQ, LSKS, GTGNL, DHEN, DI, and GTGNA. 2 positions are modified to phosphoserine: S1403 and S1411. The region spanning 1523–1601 is the WWE domain; it reads EQESRADCIS…SLSVQRLTKS (79 aa). The PARP catalytic domain maps to 1605–1801; that stretch reads IPAHWSDMKQ…YPEYLITFRK (197 aa).

It belongs to the ARTD/PARP family. Interacts with STAT6. Interacts with PARP10. Interacts with PARP9 in IFNG-stimulated macrophages; the interaction prevents PARP14-mediated STAT1 and STAT6 ADP-riboslylation. Auto-ADP-ribosylated. As to expression, expressed in macrophages.

The protein resides in the nucleus. Its subcellular location is the cytoplasm. The catalysed reaction is L-glutamyl-[protein] + NAD(+) = 5-O-(ADP-D-ribosyl)-L-glutamyl-[protein] + nicotinamide. In terms of biological role, ADP-ribosyltransferase that mediates mono-ADP-ribosylation of glutamate residues on target proteins. In contrast to PARP1 and PARP2, it is not able to mediate poly-ADP-ribosylation. Has been shown to catalyze the mono-ADP-ribosylation of STAT1 at 'Glu-657' and 'Glu-705', thus decreasing STAT1 phosphorylation which negatively regulates pro-inflammatory cytokine production in macrophages in response to IFNG stimulation. However, the role of ADP-ribosylation in the prevention of STAT1 phosphorylation has been called into question and it has been suggested that the inhibition of phosphorylation may be the result of sumoylation of STAT1 'Lys-703'. Mono-ADP-ribosylates STAT6; enhancing STAT6-dependent transcription. In macrophages, positively regulates MRC1 expression in response to IL4 stimulation by promoting STAT6 phosphorylation. Mono-ADP-ribosylates PARP9. The sequence is that of Protein mono-ADP-ribosyltransferase PARP14 from Homo sapiens (Human).